Reading from the N-terminus, the 293-residue chain is 33 kDa chaperonin (293 aa).

Disulfide bonds link C238–C240 and C271–C274.

Belongs to the HSP33 family. Post-translationally, under oxidizing conditions two disulfide bonds are formed involving the reactive cysteines. Under reducing conditions zinc is bound to the reactive cysteines and the protein is inactive.

The protein localises to the cytoplasm. Functionally, redox regulated molecular chaperone. Protects both thermally unfolding and oxidatively damaged proteins from irreversible aggregation. Plays an important role in the bacterial defense system toward oxidative stress. The chain is 33 kDa chaperonin from Staphylococcus aureus (strain Mu3 / ATCC 700698).